The sequence spans 851 residues: Receptor like protein kinase S.2 (851 aa).

A Protein kinase 1 domain is found at 117-436 (FSDELILGSG…LPSFKSHPLY (320 aa)). ATP is bound by residues 123–131 (LGSGGFGRV) and lysine 146. Residue aspartate 248 is the Proton acceptor of the active site. Residues 448–471 (SATTTTTRTTMTTTTSTTSFNASS) form a disordered region. The Protein kinase 2 domain occupies 532–819 (FSDARRVAEV…SILDGSERFF (288 aa)). ATP is bound by residues 538–546 (VAEVDFGTA) and lysine 560.

The protein belongs to the protein kinase superfamily. Ser/Thr protein kinase family.

The enzyme catalyses L-seryl-[protein] + ATP = O-phospho-L-seryl-[protein] + ADP + H(+). The catalysed reaction is L-threonyl-[protein] + ATP = O-phospho-L-threonyl-[protein] + ADP + H(+). The chain is Receptor like protein kinase S.2 (LECRKS2) from Arabidopsis thaliana (Mouse-ear cress).